Here is a 374-residue protein sequence, read N- to C-terminus: Ribosomal RNA large subunit methyltransferase G (374 aa).

This sequence belongs to the methyltransferase superfamily. RlmG family.

It is found in the cytoplasm. It catalyses the reaction guanosine(1835) in 23S rRNA + S-adenosyl-L-methionine = N(2)-methylguanosine(1835) in 23S rRNA + S-adenosyl-L-homocysteine + H(+). Functionally, specifically methylates the guanine in position 1835 (m2G1835) of 23S rRNA. In Pseudomonas paraeruginosa (strain DSM 24068 / PA7) (Pseudomonas aeruginosa (strain PA7)), this protein is Ribosomal RNA large subunit methyltransferase G.